We begin with the raw amino-acid sequence, 85 residues long: ATP synthase subunit c (85 aa).

Transmembrane regions (helical) follow at residues Leu19–Ile39 and Ile62–Val82.

Belongs to the ATPase C chain family. F-type ATPases have 2 components, F(1) - the catalytic core - and F(0) - the membrane proton channel. F(1) has five subunits: alpha(3), beta(3), gamma(1), delta(1), epsilon(1). F(0) has three main subunits: a(1), b(2) and c(10-14). The alpha and beta chains form an alternating ring which encloses part of the gamma chain. F(1) is attached to F(0) by a central stalk formed by the gamma and epsilon chains, while a peripheral stalk is formed by the delta and b chains.

It localises to the cell inner membrane. Its function is as follows. F(1)F(0) ATP synthase produces ATP from ADP in the presence of a proton or sodium gradient. F-type ATPases consist of two structural domains, F(1) containing the extramembraneous catalytic core and F(0) containing the membrane proton channel, linked together by a central stalk and a peripheral stalk. During catalysis, ATP synthesis in the catalytic domain of F(1) is coupled via a rotary mechanism of the central stalk subunits to proton translocation. In terms of biological role, key component of the F(0) channel; it plays a direct role in translocation across the membrane. A homomeric c-ring of between 10-14 subunits forms the central stalk rotor element with the F(1) delta and epsilon subunits. The polypeptide is ATP synthase subunit c (Bacteroides fragilis (strain ATCC 25285 / DSM 2151 / CCUG 4856 / JCM 11019 / LMG 10263 / NCTC 9343 / Onslow / VPI 2553 / EN-2)).